The chain runs to 146 residues: Catabolic 3-dehydroquinase (146 aa).

Tyrosine 24 (proton acceptor) is an active-site residue. The substrate site is built by asparagine 78, histidine 84, and aspartate 91. Catalysis depends on histidine 104, which acts as the Proton donor. Substrate-binding positions include 105–106 (IT) and arginine 115.

Belongs to the type-II 3-dehydroquinase family. As to quaternary structure, homododecamer. Adopts a ring-like structure, composed of an arrangement of two hexameric rings stacked on top of one another.

The catalysed reaction is 3-dehydroquinate = 3-dehydroshikimate + H2O. It functions in the pathway aromatic compound metabolism; 3,4-dihydroxybenzoate biosynthesis; 3,4-dihydroxybenzoate from 3-dehydroquinate: step 1/2. In terms of biological role, is involved in the catabolism of quinate. Allows the utilization of quinate as carbon source via the beta-ketoadipate pathway. This Meyerozyma guilliermondii (strain ATCC 6260 / CBS 566 / DSM 6381 / JCM 1539 / NBRC 10279 / NRRL Y-324) (Yeast) protein is Catabolic 3-dehydroquinase.